We begin with the raw amino-acid sequence, 621 residues long: Cystathionine gamma-synthase (621 aa).

Lysine 429 carries the N6-(pyridoxal phosphate)lysine modification.

It belongs to the trans-sulfuration enzymes family. MET7 subfamily. In terms of assembly, both met-3 and met-7 are required to form a functional cystathionine gamma-synthase. Requires pyridoxal 5'-phosphate as cofactor.

The enzyme catalyses O-succinyl-L-homoserine + L-cysteine = L,L-cystathionine + succinate + H(+). The protein operates within amino-acid biosynthesis; L-methionine biosynthesis via de novo pathway; L-cystathionine from O-succinyl-L-homoserine: step 1/1. In terms of biological role, catalyzes the formation of L-cystathionine from O-succinyl-L-homoserine (OSHS) and L-cysteine, via a gamma-replacement reaction. In the absence of thiol, catalyzes gamma-elimination to form 2-oxobutanoate, succinate and ammonia. The protein is Cystathionine gamma-synthase (met-7) of Neurospora crassa (strain ATCC 24698 / 74-OR23-1A / CBS 708.71 / DSM 1257 / FGSC 987).